Here is a 366-residue protein sequence, read N- to C-terminus: 3-dehydroquinate synthase (366 aa).

NAD(+)-binding positions include 69–74 (DGEAYK), 103–107 (GVIGD), 127–128 (TT), K140, and K149. Zn(2+)-binding residues include E182, H245, and H262.

It belongs to the sugar phosphate cyclases superfamily. Dehydroquinate synthase family. It depends on Co(2+) as a cofactor. Requires Zn(2+) as cofactor. NAD(+) serves as cofactor.

The protein localises to the cytoplasm. The enzyme catalyses 7-phospho-2-dehydro-3-deoxy-D-arabino-heptonate = 3-dehydroquinate + phosphate. It participates in metabolic intermediate biosynthesis; chorismate biosynthesis; chorismate from D-erythrose 4-phosphate and phosphoenolpyruvate: step 2/7. In terms of biological role, catalyzes the conversion of 3-deoxy-D-arabino-heptulosonate 7-phosphate (DAHP) to dehydroquinate (DHQ). The protein is 3-dehydroquinate synthase of Pseudomonas fluorescens (strain ATCC BAA-477 / NRRL B-23932 / Pf-5).